The primary structure comprises 916 residues: Protein translocase subunit SecA (916 aa).

ATP contacts are provided by residues Q87, 105–109 (GEGKT), and D512. The interval 857-916 (QHAEAPSMEQAVAGEDEELPEGPAPVVPLEPVRNEQKIGRNEPCPCGSGKKYKHCHGQLD) is disordered. C900, C902, C911, and H912 together coordinate Zn(2+). The span at 906–916 (KKYKHCHGQLD) shows a compositional bias: basic residues.

The protein belongs to the SecA family. In terms of assembly, monomer and homodimer. Part of the essential Sec protein translocation apparatus which comprises SecA, SecYEG and auxiliary proteins SecDF-YajC and YidC. Zn(2+) is required as a cofactor.

Its subcellular location is the cell inner membrane. The protein resides in the cytoplasm. It carries out the reaction ATP + H2O + cellular proteinSide 1 = ADP + phosphate + cellular proteinSide 2.. In terms of biological role, part of the Sec protein translocase complex. Interacts with the SecYEG preprotein conducting channel. Has a central role in coupling the hydrolysis of ATP to the transfer of proteins into and across the cell membrane, serving both as a receptor for the preprotein-SecB complex and as an ATP-driven molecular motor driving the stepwise translocation of polypeptide chains across the membrane. In Pseudomonas paraeruginosa (strain DSM 24068 / PA7) (Pseudomonas aeruginosa (strain PA7)), this protein is Protein translocase subunit SecA.